A 339-amino-acid polypeptide reads, in one-letter code: Serpentine receptor class alpha-20 (339 aa).

6 helical membrane passes run 30–50, 113–132, 151–171, 199–219, 249–269, and 284–304; these read VSFVFLATVILLSYYFAVLAI, LYFYYLTNYFSTYSVFSLTF, VSISLLIIQLVFTLGTYYFGL, FRTTIMVFCIIVTIFIYYLNV, CILIVLQFVCISVSSFGVNYI, and IAPFVVGVTYANLCLPLVIYF.

It belongs to the nematode receptor-like protein sra family.

The protein resides in the membrane. The polypeptide is Serpentine receptor class alpha-20 (sra-20) (Caenorhabditis elegans).